The sequence spans 54 residues: ATP synthase protein 8 (54 aa).

The helical transmembrane segment at 8–28 threads the bilayer; it reads WWLLNFFLGWTSLLVIFIILL.

The protein belongs to the ATPase protein 8 family. In terms of assembly, F-type ATPases have 2 components, CF(1) - the catalytic core - and CF(0) - the membrane proton channel.

It localises to the mitochondrion membrane. In terms of biological role, mitochondrial membrane ATP synthase (F(1)F(0) ATP synthase or Complex V) produces ATP from ADP in the presence of a proton gradient across the membrane which is generated by electron transport complexes of the respiratory chain. F-type ATPases consist of two structural domains, F(1) - containing the extramembraneous catalytic core and F(0) - containing the membrane proton channel, linked together by a central stalk and a peripheral stalk. During catalysis, ATP synthesis in the catalytic domain of F(1) is coupled via a rotary mechanism of the central stalk subunits to proton translocation. Part of the complex F(0) domain. Minor subunit located with subunit a in the membrane. The chain is ATP synthase protein 8 (MT-ATP8) from Patiria pectinifera (Starfish).